A 264-amino-acid chain; its full sequence is Small ribosomal subunit protein eS1A (264 aa).

Positions 233–264 (GEGGGTGKPAGDETGAKVERADGYEPPVQESV) are disordered. Basic and acidic residues predominate over residues 242 to 255 (AGDETGAKVERADG).

Belongs to the eukaryotic ribosomal protein eS1 family. As to quaternary structure, component of the small ribosomal subunit. Mature ribosomes consist of a small (40S) and a large (60S) subunit. The 40S subunit contains about 33 different proteins and 1 molecule of RNA (18S). The 60S subunit contains about 49 different proteins and 3 molecules of RNA (28S, 5.8S and 5S). Part of the small subunit (SSU) processome, composed of more than 70 proteins and the RNA chaperone small nucleolar RNA (snoRNA) U3.

It is found in the cytoplasm. Its subcellular location is the nucleus. It localises to the nucleolus. Component of the small ribosomal subunit. The ribosome is a large ribonucleoprotein complex responsible for the synthesis of proteins in the cell. Part of the small subunit (SSU) processome, first precursor of the small eukaryotic ribosomal subunit. During the assembly of the SSU processome in the nucleolus, many ribosome biogenesis factors, an RNA chaperone and ribosomal proteins associate with the nascent pre-rRNA and work in concert to generate RNA folding, modifications, rearrangements and cleavage as well as targeted degradation of pre-ribosomal RNA by the RNA exosome. May play a role during erythropoiesis. In Xenopus laevis (African clawed frog), this protein is Small ribosomal subunit protein eS1A (rps3a-a).